Consider the following 148-residue polypeptide: Protoporphyrinogen IX oxidase (148 aa).

4 helical membrane passes run 7 to 27 (YFLWVKAFHVIAVISWMAALF), 58 to 78 (SFIASPAMGFTLITGILMLLI), 86 to 106 (GGWLHAKLALVVLLLAYHFYC), and 128 to 148 (FNEAPTILMILIVILVVVKPF). Heme is bound at residue H15. K92 contributes to the heme binding site.

The protein belongs to the HemJ family. Homodimer. The cofactor is heme b.

It is found in the cell membrane. The enzyme catalyses protoporphyrinogen IX + 3 A = protoporphyrin IX + 3 AH2. It participates in porphyrin-containing compound metabolism; protoporphyrin-IX biosynthesis; protoporphyrin-IX from protoporphyrinogen-IX: step 1/1. Catalyzes the oxidation of protoporphyrinogen IX to protoporphyrin IX. Is involved in the biosynthesis of tetrapyrrole molecules like heme. Does not use oxygen or artificial electron acceptors such as menadione or benzoquinone. The protein is Protoporphyrinogen IX oxidase of Helicobacter pylori (strain ATCC 700392 / 26695) (Campylobacter pylori).